A 366-amino-acid polypeptide reads, in one-letter code: Mannonate dehydratase (366 aa).

It belongs to the mannonate dehydratase family. Fe(2+) is required as a cofactor. The cofactor is Mn(2+).

It catalyses the reaction D-mannonate = 2-dehydro-3-deoxy-D-gluconate + H2O. It functions in the pathway carbohydrate metabolism; pentose and glucuronate interconversion. Catalyzes the dehydration of D-mannonate. The chain is Mannonate dehydratase from Streptococcus suis (strain 98HAH33).